Reading from the N-terminus, the 272-residue chain is NADPH-dependent 7-cyano-7-deazaguanine reductase (272 aa).

Position 82–84 (82–84) interacts with substrate; that stretch reads IES. 84-85 contributes to the NADPH binding site; it reads SK. Catalysis depends on C178, which acts as the Thioimide intermediate. D185 functions as the Proton donor in the catalytic mechanism. 217-218 serves as a coordination point for substrate; sequence HE. 246–247 is a binding site for NADPH; sequence RG.

Belongs to the GTP cyclohydrolase I family. QueF type 2 subfamily. Homodimer.

It localises to the cytoplasm. It carries out the reaction 7-aminomethyl-7-carbaguanine + 2 NADP(+) = 7-cyano-7-deazaguanine + 2 NADPH + 3 H(+). It participates in tRNA modification; tRNA-queuosine biosynthesis. In terms of biological role, catalyzes the NADPH-dependent reduction of 7-cyano-7-deazaguanine (preQ0) to 7-aminomethyl-7-deazaguanine (preQ1). This chain is NADPH-dependent 7-cyano-7-deazaguanine reductase, found in Stenotrophomonas maltophilia (strain K279a).